The chain runs to 945 residues: Isoleucine--tRNA ligase (945 aa).

The short motif at 66 to 76 (PYANGDIHLGH) is the 'HIGH' region element. E581 provides a ligand contact to L-isoleucyl-5'-AMP. The 'KMSKS' region motif lies at 622–626 (KMSKS). K625 contributes to the ATP binding site. The Zn(2+) site is built by C908, C911, C928, and C931.

Belongs to the class-I aminoacyl-tRNA synthetase family. IleS type 1 subfamily. In terms of assembly, monomer. Requires Zn(2+) as cofactor.

It localises to the cytoplasm. The catalysed reaction is tRNA(Ile) + L-isoleucine + ATP = L-isoleucyl-tRNA(Ile) + AMP + diphosphate. Functionally, catalyzes the attachment of isoleucine to tRNA(Ile). As IleRS can inadvertently accommodate and process structurally similar amino acids such as valine, to avoid such errors it has two additional distinct tRNA(Ile)-dependent editing activities. One activity is designated as 'pretransfer' editing and involves the hydrolysis of activated Val-AMP. The other activity is designated 'posttransfer' editing and involves deacylation of mischarged Val-tRNA(Ile). The sequence is that of Isoleucine--tRNA ligase from Burkholderia orbicola (strain MC0-3).